Consider the following 254-residue polypeptide: Thiazole synthase (254 aa).

The active-site Schiff-base intermediate with DXP is Lys-95. 1-deoxy-D-xylulose 5-phosphate-binding positions include Gly-156, 182–183 (AG), and 204–205 (NT).

The protein belongs to the ThiG family. As to quaternary structure, homotetramer. Forms heterodimers with either ThiH or ThiS.

The protein localises to the cytoplasm. It carries out the reaction [ThiS sulfur-carrier protein]-C-terminal-Gly-aminoethanethioate + 2-iminoacetate + 1-deoxy-D-xylulose 5-phosphate = [ThiS sulfur-carrier protein]-C-terminal Gly-Gly + 2-[(2R,5Z)-2-carboxy-4-methylthiazol-5(2H)-ylidene]ethyl phosphate + 2 H2O + H(+). The protein operates within cofactor biosynthesis; thiamine diphosphate biosynthesis. Functionally, catalyzes the rearrangement of 1-deoxy-D-xylulose 5-phosphate (DXP) to produce the thiazole phosphate moiety of thiamine. Sulfur is provided by the thiocarboxylate moiety of the carrier protein ThiS. In vitro, sulfur can be provided by H(2)S. The sequence is that of Thiazole synthase from Shewanella sediminis (strain HAW-EB3).